The primary structure comprises 520 residues: UBX domain-containing protein 11 (520 aa).

The disordered stretch occupies residues 1–26; the sequence is MSSPLASLSKTRKVPLPSEPMNPGRR. Positions 76–149 form a coiled coil; that stretch reads MAFMTRKLWD…VREMERFLSD (74 aa). An SEP domain is found at 230 to 294; the sequence is LEPIPLKLYR…VSDLRNQVYL (65 aa). Residues 392-469 form the UBX domain; sequence PAPPLSMLRI…GLVPKAALLL (78 aa). Residues 476-520 form a disordered region; the sequence is KSSLKFSPGPCPGPGPGPSPGPGPGPSPGPGPGPSPCPGPSPSPQ. Residues 484 to 520 are compositionally biased toward pro residues; sequence GPCPGPGPGPSPGPGPGPSPGPGPGPSPCPGPSPSPQ. Tandem repeats lie at residues 487-494, 495-502, and 503-510. The segment at 487–510 is 3 X 8 AA tandem repeats of P-G-P-G-P-G-P-S; the sequence is PGPGPGPSPGPGPGPSPGPGPGPS.

Interacts with GNA12, GNA13, RND1, RND2 and RND3.

It localises to the cytoplasm. The protein localises to the cytoskeleton. Functionally, may be involved in the reorganization of actin cytoskeleton mediated by RND1, RND2 and RND3. Promotes RHOA activation mediated by GNA12 and GNA13. The polypeptide is UBX domain-containing protein 11 (UBXN11) (Homo sapiens (Human)).